We begin with the raw amino-acid sequence, 704 residues long: MESTANALVVKVSYGGVLRRFRVPVKANGQLDLEMAGLKEKIAALFNLSADAELSLTYSDEDGDVVALVDDNDLFDVTNQRLKFLKINVNAGVSTNSAAPESSGSSTPAGMPNPVSKIQKGINDVLMAVPNPMRDTISKVYMDLASKASTSSPVVGEMLDCISKLGQLSIPQESSPCSPVTKPGSSGASLSRDVPSAGGKKDISERTQTGRKPVNLNEPTGAHSKTSGHVPNSSGLGANFNECPFSGSTMNYSCPNPVNLNKHPRRVCHSKKSTNGDYWTSLGVFHKGIRCDGCGVLPITGPRFKSKVKEDYDLCTICYSVMGNEGDYTRMDKPVSVQHLHPFRGPFTQFPNPWLSHPVPRATNGGAPLRCTRPKLDSRFVLDVNVIDGTVVAPSAPFTKIWKMRNSGSLVWPQGTQIVWIGGDRFCNSLSVDLQIPKEGVPIYSELDVKVDFVAPELPGRYISYWRMATSDGAKFGQRVWVLIHVDASLKNSVVNEFHGLNLNASPSLDENFPSEFLGIMNYESAQPGSSSVNPGTVKGTDLEGEVGETQAVEKENLLVGEAHPAIPHGHSPSSSSSSFNMVDFPSMPAVEVLSGGSSSTTKDVPVPLQEDIEKNDVEITMLKELEEMGFKEIDLNKEILRDNEYNLEQSVDALCGVSEWDPILEELQEMGFCDDVTNKRLLKKNNGSIKGVVMDLLTGEKEA.

The residue at position 1 (Met1) is an N-acetylmethionine. Residues 7 to 92 (ALVVKVSYGG…KFLKINVNAG (86 aa)) form the PB1 domain. Polar residues-rich tracts occupy residues 95 to 108 (TNSA…SSTP), 171 to 189 (PQES…SGAS), and 223 to 233 (HSKTSGHVPNS). Disordered regions lie at residues 95-114 (TNSA…MPNP) and 171-233 (PQES…VPNS). A ZZ-type; degenerate zinc finger spans residues 286 to 336 (HKGIRCDGCGVLPITGPRFKSKVKEDYDLCTICYSVMGNEGDYTRMDKPVS). Cys291, Cys294, Cys315, and Cys318 together coordinate Zn(2+). The UBA domain occupies 657-701 (GVSEWDPILEELQEMGFCDDVTNKRLLKKNNGSIKGVVMDLLTGE). The LIR motif lies at 661 to 664 (WDPI).

In terms of assembly, homodimer. Interacts with ATG8A, ATG8B, ATG8C, ATG8D, ATG8F and ATG8I. Binds to ubiquitin.

The protein resides in the cytoplasm. The protein localises to the vacuole. Autophagic substrate degraded in the vacuole by non-selective autophagy. Requires ATG8 protein expression to be recognized as an autophagic substrate. Acts probably as a receptor for autophagosomal degradation of ubiquitinated proteins. Targets ubiquitinated protein aggregates derived from denatured or damaged non-native proteins generated under stress conditions. Functions additively with the E3 ubiquitin-protein ligase CHIP for autophagosomal degradation of proteotoxic aggregates formed under stress conditions. The protein is Protein NBR1 homolog of Arabidopsis thaliana (Mouse-ear cress).